A 452-amino-acid polypeptide reads, in one-letter code: Probable ECA polymerase (452 aa).

11 helical membrane passes run 6 to 26, 37 to 57, 63 to 83, 118 to 138, 155 to 175, 181 to 201, 207 to 227, 228 to 248, 341 to 361, 378 to 398, and 410 to 430; these read FSGLLVVWLLSTLFIATLTWF, VFFSLLFLLTFFFGFPLTSVL, VGVAPPEILLQALLSAACFYG, VILMGIALVSVAIFFMHNGFL, GVALKRFFYFFIPAMLVVYFL, AWLFFLVSTVAFGLLTYMIVG, IIIAFAIFLFIGIIRGWISLW, MLVAAGVLGIVGMFWLALKRY, LVVMGGALFIPLGAIVVGLII, YKAAILHSFCFGAIFNMIVLA, and VFFLVVFGASLLVAKLLFWLF.

Belongs to the WzyE family. Probably part of a complex composed of WzxE, WzyE and WzzE.

It is found in the cell inner membrane. Its pathway is bacterial outer membrane biogenesis; enterobacterial common antigen biosynthesis. In terms of biological role, probably involved in the polymerization of enterobacterial common antigen (ECA) trisaccharide repeat units. This Salmonella agona (strain SL483) protein is Probable ECA polymerase.